Here is a 376-residue protein sequence, read N- to C-terminus: Glucose-1-phosphate adenylyltransferase (376 aa).

Alpha-D-glucose 1-phosphate contacts are provided by residues tyrosine 101, glycine 166, 181-182 (EK), and serine 192.

Belongs to the bacterial/plant glucose-1-phosphate adenylyltransferase family. Homotetramer.

It catalyses the reaction alpha-D-glucose 1-phosphate + ATP + H(+) = ADP-alpha-D-glucose + diphosphate. The protein operates within glycan biosynthesis; glycogen biosynthesis. Functionally, involved in the biosynthesis of ADP-glucose, a building block required for the elongation reactions to produce glycogen. Catalyzes the reaction between ATP and alpha-D-glucose 1-phosphate (G1P) to produce pyrophosphate and ADP-Glc. The sequence is that of Glucose-1-phosphate adenylyltransferase from Bacillus mycoides (strain KBAB4) (Bacillus weihenstephanensis).